The sequence spans 164 residues: MAGKKTKSGMISHGMAAQNRKGRFDYTILETTEAGIVLKGPEVKSLRLGRATITEAYAAERDGEIWLFNSYIPEYQGGVLSRFEPRAPRKLLMHRKQIAHFLGAVSRAGASLVPLDIHFNARGMAKVTLGLGQGRRKEDKRHAIAERDWKRDKARLVRSSGKDY.

Belongs to the SmpB family.

The protein resides in the cytoplasm. Its function is as follows. Required for rescue of stalled ribosomes mediated by trans-translation. Binds to transfer-messenger RNA (tmRNA), required for stable association of tmRNA with ribosomes. tmRNA and SmpB together mimic tRNA shape, replacing the anticodon stem-loop with SmpB. tmRNA is encoded by the ssrA gene; the 2 termini fold to resemble tRNA(Ala) and it encodes a 'tag peptide', a short internal open reading frame. During trans-translation Ala-aminoacylated tmRNA acts like a tRNA, entering the A-site of stalled ribosomes, displacing the stalled mRNA. The ribosome then switches to translate the ORF on the tmRNA; the nascent peptide is terminated with the 'tag peptide' encoded by the tmRNA and targeted for degradation. The ribosome is freed to recommence translation, which seems to be the essential function of trans-translation. This chain is SsrA-binding protein, found in Gluconobacter oxydans (strain 621H) (Gluconobacter suboxydans).